A 215-amino-acid polypeptide reads, in one-letter code: MKNVDFCTFGVKLGMTQILDNFGNLVPVTIVSQPKPCVITRVTTSLNSQQKLIIQIGCYSDFRANKPTIGYFKKQSVPNLRYLHEFQTYKNNEYQVGKSLDLKELDQQLVQVSAYTIGKGFAGYQKKHKFSRGAMSHGSKSHRRPGSIGAGTTPGRVFPGVKMAGRLGFSRRSIKNLLVLKVDLTNKLFLLKGSVPGKYGNLLLVSLKKTNYFLD.

Residues 132 to 151 (RGAMSHGSKSHRRPGSIGAG) are disordered.

It belongs to the universal ribosomal protein uL3 family. Part of the 50S ribosomal subunit.

It is found in the plastid. It localises to the chloroplast. Functionally, one of the primary rRNA binding proteins, it binds directly near the 3'-end of the 23S rRNA, where it nucleates assembly of the 50S subunit. This is Large ribosomal subunit protein uL3c (rpl3) from Cyanidium caldarium (Red alga).